Reading from the N-terminus, the 166-residue chain is Glutamyl-tRNA(Gln) amidotransferase subunit C-2, mitochondrial (166 aa).

Belongs to the GatC family. In terms of assembly, subunit of the heterotrimeric GatCAB amidotransferase (AdT) complex, composed of A, B and C subunits.

It localises to the mitochondrion. The catalysed reaction is L-glutamyl-tRNA(Gln) + L-glutamine + ATP + H2O = L-glutaminyl-tRNA(Gln) + L-glutamate + ADP + phosphate + H(+). Functionally, allows the formation of correctly charged Gln-tRNA(Gln) through the transamidation of misacylated Glu-tRNA(Gln) in the mitochondria. The reaction takes place in the presence of glutamine and ATP through an activated gamma-phospho-Glu-tRNA(Gln). In Culex quinquefasciatus (Southern house mosquito), this protein is Glutamyl-tRNA(Gln) amidotransferase subunit C-2, mitochondrial.